A 211-amino-acid chain; its full sequence is Large ribosomal subunit protein bL25 (211 aa).

Positions 186–211 (GRALQSMDAAESAVEQPGEQPATAAG) are disordered.

It belongs to the bacterial ribosomal protein bL25 family. CTC subfamily. Part of the 50S ribosomal subunit; part of the 5S rRNA/L5/L18/L25 subcomplex. Contacts the 5S rRNA. Binds to the 5S rRNA independently of L5 and L18.

Functionally, this is one of the proteins that binds to the 5S RNA in the ribosome where it forms part of the central protuberance. The sequence is that of Large ribosomal subunit protein bL25 from Gloeobacter violaceus (strain ATCC 29082 / PCC 7421).